We begin with the raw amino-acid sequence, 527 residues long: Eukaryotic translation initiation factor 4B1 (527 aa).

Disordered regions lie at residues 1-370 (MAKP…REVV) and 453-527 (FGQR…RQGW). Low complexity-rich tracts occupy residues 35 to 45 (AAAGGAASFPS) and 74 to 85 (GAAGAPRRVAPA). 2 stretches are compositionally biased toward basic and acidic residues: residues 102–155 (PRER…DNWG) and 181–194 (RSDD…DKKP). The Nuclear localization signal signature appears at 196-203 (PSRYPSLG). The segment covering 203–232 (GTGGGFRESSGGGFRESSGGGFRESSGGGF) has biased composition (gly residues). The span at 293–317 (KPREEVLAEKGLDWRKMEGEIEKKT) shows a compositional bias: basic and acidic residues. Residues 319-336 (RPTSSHSSRPNSAHSSRP) are compositionally biased toward low complexity. Basic and acidic residues-rich tracts occupy residues 472–485 (EEPH…DRPR) and 496–510 (PVEE…RERG). Residues 518 to 527 (SDRSSTRQGW) show a composition bias toward low complexity.

The protein belongs to the eIF-4 subunit B family. In terms of assembly, homodimer. Nonspherical monomer. mRNA-discriminating component of initiation complexes. In terms of processing, phosphorylated.

It localises to the nucleus. Promotes the eIF4F and eIF4A RNA-dependent ATP-hydrolysis activity with different efficiency depending on mRNAs, thus providing mRNA discrimination during initiation of translation. In Triticum aestivum (Wheat), this protein is Eukaryotic translation initiation factor 4B1.